We begin with the raw amino-acid sequence, 800 residues long: Nucleolar RNA helicase 2-B (800 aa).

A compositionally biased stretch (basic and acidic residues) spans 1-14 (MPGKVYTDEMEGKS). Positions 1 to 200 (MPGKVYTDEM…TDTSEITAAN (200 aa)) are disordered. Over residues 114–124 (ETNISLSSQGG) the composition is skewed to polar residues. A Q motif motif is present at residues 221-249 (GDFSKFPISKDTIKNLQAKGVTYLFPIQS). One can recognise a Helicase ATP-binding domain in the interval 252 to 431 (FHTVYSGKDV…KKYMRKQYEK (180 aa)). 265-272 (ARTGTGKT) serves as a coordination point for ATP. The DEAD box motif lies at 374–377 (DEVD). The Helicase C-terminal domain occupies 464–620 (DIVQVYSGSH…SSADAIKSLD (157 aa)). Positions 750–800 (IQESERSFDGPRNRSFGGRGRRPFDRRNNSRNSSGGGGGRRGRSGGFRRGR) are disordered. The span at 752–761 (ESERSFDGPR) shows a compositional bias: basic and acidic residues. Residues 789-800 (RRGRSGGFRRGR) are compositionally biased toward basic residues.

Belongs to the DEAD box helicase family. DDX21/DDX50 subfamily. Widely expressed. Expressed at higher level in stomach. Expressed at lower level compared to ddx21-a.

Its subcellular location is the nucleus. The protein resides in the nucleolus. It localises to the nucleoplasm. The protein localises to the cytoplasm. It is found in the cytosol. Its subcellular location is the mitochondrion. The enzyme catalyses ATP + H2O = ADP + phosphate + H(+). Functionally, RNA helicase that acts as a sensor of the transcriptional status of both RNA polymerase (Pol) I and II: promotes ribosomal RNA (rRNA) processing and transcription from polymerase II (Pol II). Binds various RNAs, such as rRNAs, snoRNAs, 7SK and, at lower extent, mRNAs. In the nucleolus, localizes to rDNA locus, where it directly binds rRNAs and snoRNAs, and promotes rRNA transcription, processing and modification. Required for rRNA 2'-O-methylation, possibly by promoting the recruitment of late-acting snoRNAs SNORD56 and SNORD58 with pre-ribosomal complexes. In the nucleoplasm, binds 7SK RNA and is recruited to the promoters of Pol II-transcribed genes: acts by facilitating the release of P-TEFb from inhibitory 7SK snRNP in a manner that is dependent on its helicase activity, thereby promoting transcription of its target genes. Required to prevent R-loop-associated DNA damage and transcription-associated genomic instability. This chain is Nucleolar RNA helicase 2-B (ddx21-b), found in Xenopus laevis (African clawed frog).